A 244-amino-acid chain; its full sequence is 5'-deoxynucleotidase (244 aa).

The catalysed reaction is a 2'-deoxyribonucleoside 5'-phosphate + H2O = a 2'-deoxyribonucleoside + phosphate. Functionally, following host DNA degradation, is responsible for the degradation of 5'-dNMP's to deoxynucleosides that can be further excreted. Active on deoxynucleoside 5'-monophosphates but not active as a phosphatase on ribonucleotides, deoxynucleoside 5'-triphosphates, deoxynucleoside 3'-monophosphates, or deoxyoligonucleotides. This is 5'-deoxynucleotidase (dmp) from Escherichia coli (Enterobacteria phage T5).